The following is a 1248-amino-acid chain: Structural polyprotein (1248 aa).

A compositionally biased stretch (polar residues) spans 1–10 (MEFIPTQTFY). The tract at residues 1–104 (MEFIPTQTFY…KKKKPGRRER (104 aa)) is disordered. The interval 36-68 (RKAGQLAQLISAVNKLTMRAVPQQKPRKNRKNK) is host transcription inhibition. Residues 60–72 (KPRKNRKNKKQKQ) are compositionally biased toward basic residues. Residues 61–99 (PRKNRKNKKQKQKQQAPRNNMNQKKQPPKKKPAQKKKKP) carry the Nuclear localization signal motif. The span at 73-85 (KQQAPRNNMNQKK) shows a compositional bias: low complexity. The segment at 84–114 (KKQPPKKKPAQKKKKPGRRERMCMKIENDCI) is binding to the viral RNA. Positions 86-101 (QPPKKKPAQKKKKPGR) are enriched in basic residues. Residues 99–113 (PGRRERMCMKIENDC) are ribosome-binding. A disulfide bond links Cys113 and Cys128. The 149-residue stretch at 113–261 (CIFEVKHEGK…KITPEGAEEW (149 aa)) folds into the Peptidase S3 domain. His139 functions as the Charge relay system in the catalytic mechanism. The short motif at 144 to 154 (IDNADLAKLAF) is the Nuclear export signal element. Residues 155–160 (KRSSKY) are interaction with spike glycoprotein E2. Asp161 (charge relay system) is an active-site residue. Residues 183–193 (PEGYYNWHHGA) form a dimerization of the capsid protein region. Catalysis depends on Ser213, which acts as the Charge relay system. The interval 219–223 (DNKGR) is dimerization of the capsid protein. The segment at 262–274 (SLAIPVMCLLANT) is functions as an uncleaved signal peptide for the precursor of protein E3/E2. Residues 262 to 692 (SLAIPVMCLL…YYYELYPTMT (431 aa)) lie on the Extracellular side of the membrane. 9 disulfides stabilise this stretch: Cys269-Cys278, Cys283-Cys287, Cys286-Cys318, Cys344-Cys450, Cys347-Cys353, Cys416-Cys430, Cys478-Cys591, Cys526-Cys550, and Cys528-Cys545. Asn273 is a glycosylation site (N-linked (GlcNAc...) asparagine; by host). 2 interaction with host Mxra8 receptor regions span residues 351-354 (HSCH) and 387-389 (HDW). Interaction with host Mxra8 receptor stretches follow at residues 509–512 (QSGN) and 541–547 (VINNCKV). 2 N-linked (GlcNAc...) asparagine; by host glycosylation sites follow: Asn588 and Asn670. A helical transmembrane segment spans residues 693 to 713 (VVVVSVASFVLLSMVGVAVGM). At 714 to 748 (CMCARRRCITPYELTPGATVPFLLSLICCIRTAKA) the chain is on the cytoplasmic side. The interval 716–720 (CARRR) is interaction with the capsid protein. 3 S-palmitoyl cysteine; by host lipidation sites follow: Cys721, Cys741, and Cys742. The transient transmembrane before p62-6K protein processing stretch occupies residues 721 to 741 (CITPYELTPGATVPFLLSLIC). Cysteines 721 and 742 form a disulfide. The Extracellular portion of the chain corresponds to 749–763 (ATYQEAAVYLWNEQQ). The helical transmembrane segment at 764–784 (PLFWLQAIIPLAALIVLCNCL) threads the bilayer. Topologically, residues 785–795 (RLLPCCCKTLT) are cytoplasmic. The chain crosses the membrane as a helical span at residues 796 to 816 (FLAVMSVGAHTVSAYEHVTVI). The Extracellular portion of the chain corresponds to 817 to 1224 (PNTVGVPYKT…AMSWVQKITG (408 aa)). Disulfide bonds link Cys858/Cys923, Cys871/Cys903, and Cys877/Cys887. The interval 893–910 (VYPFMWGGAYCFCDTENT) is E1 fusion peptide loop. Asn950 and Asn1079 each carry an N-linked (GlcNAc...) asparagine; by host glycan. 4 disulfides stabilise this stretch: Cys1068–Cys1080, Cys1110–Cys1185, Cys1115–Cys1189, and Cys1137–Cys1179. Residues 1225–1245 (GVGLVVAVAALILIVVLCVSF) traverse the membrane as a helical segment. Cys1242 carries the S-palmitoyl cysteine; by host lipid modification. The Cytoplasmic segment spans residues 1246-1248 (SRH).

In terms of assembly, homodimer. Homomultimer. Interacts with host karyopherin KPNA4; this interaction allows the nuclear import of the viral capsid protein. Interacts with spike glycoprotein E2. Interacts with host IRAK1; the interaction leads to inhibition of IRAK1-dependent signaling. The precursor of protein E3/E2 and E1 form a heterodimer shortly after synthesis. As to quaternary structure, interacts with spike glycoprotein E2. The precursor of protein E3/E2 and E1 form a heterodimer shortly after synthesis. Processing of the precursor of protein E3/E2 into E2 and E3 results in a heterodimer of the spike glycoproteins E2 and E1. Spike at virion surface are constituted of three E2-E1 heterodimers. After target cell attachment and endocytosis, E1 change conformation to form homotrimers. Interacts with 6K protein. Interacts with host MXRA8; this interaction mediates virus entry. The interaction involves 2 adjacent E2-E1 heterodimers. In terms of assembly, interacts with spike glycoprotein E1. Processing of the precursor of protein E3/E2 into E2 and E3 results in a heterodimer of the spike glycoproteins E2 and E1. Spike at virion surface are constituted of a trimer of E2-E1 heterodimers. Interacts with 6K protein. Interacts with host MXRA8; this interaction mediates virus entry. The interaction involves 2 adjacent E2-E1 heterodimers. Oligomer. Interacts with spike glycoprotein E1. Interacts with spike glycoprotein E2. In terms of processing, structural polyprotein: Specific enzymatic cleavages in vivo yield mature proteins. Capsid protein is auto-cleaved during polyprotein translation, unmasking a signal peptide at the N-terminus of the precursor of E3/E2. The remaining polyprotein is then targeted to the host endoplasmic reticulum, where host signal peptidase cleaves it into pE2, 6K and E1 proteins. pE2 is further processed to mature E3 and E2 by host furin in trans-Golgi vesicle. Palmitoylated via thioester bonds. These palmitoylations may induce disruption of the C-terminus transmembrane. This would result in the reorientation of E2 C-terminus from lumenal to cytoplasmic side. Post-translationally, N-glycosylated. In terms of processing, palmitoylated via thioester bonds.

The protein localises to the virion. It localises to the host cytoplasm. It is found in the host cell membrane. The protein resides in the host nucleus. Its subcellular location is the virion membrane. The protein localises to the host Golgi apparatus. It localises to the host trans-Golgi network. It is found in the host endoplasmic reticulum. The enzyme catalyses Autocatalytic release of the core protein from the N-terminus of the togavirus structural polyprotein by hydrolysis of a -Trp-|-Ser- bond.. Its function is as follows. Forms an icosahedral capsid with a T=4 symmetry composed of 240 copies of the capsid protein surrounded by a lipid membrane through which penetrate 80 spikes composed of trimers of E1-E2 heterodimers. The capsid protein binds to the viral RNA genome at a site adjacent to a ribosome binding site for viral genome translation following genome release. Possesses a protease activity that results in its autocatalytic cleavage from the nascent structural protein. Following its self-cleavage, the capsid protein transiently associates with ribosomes, and within several minutes the protein binds to viral RNA and rapidly assembles into icosahedric core particles. The resulting nucleocapsid eventually associates with the cytoplasmic domain of the spike glycoprotein E2 at the cell membrane, leading to budding and formation of mature virions. In case of infection, new virions attach to target cells and after clathrin-mediated endocytosis their membrane fuses with the host endosomal membrane. This leads to the release of the nucleocapsid into the cytoplasm, followed by an uncoating event necessary for the genomic RNA to become accessible. The uncoating might be triggered by the interaction of capsid proteins with ribosomes. Binding of ribosomes would release the genomic RNA since the same region is genomic RNA-binding and ribosome-binding. Specifically inhibits interleukin-1 receptor-associated kinase 1/IRAK1-dependent signaling during viral entry, representing a means by which the alphaviruses may evade innate immune detection and activation prior to viral gene expression. Degrades host cyclic GMP-AMP synthase (CGAS) thereby inhibiting the cGAS-STING pathway. Functionally, provides the signal sequence for the translocation of the precursor of protein E3/E2 to the host endoplasmic reticulum. Furin-cleaved E3 remains associated with spike glycoprotein E1 and mediates pH protection of the latter during the transport via the secretory pathway. After virion release from the host cell, the assembly protein E3 is gradually released in the extracellular space. Plays a role in viral attachment to target host cell, by binding to the cell receptor MXRA8. Synthesized as a p62 precursor which is processed by furin at the cell membrane just before virion budding, giving rise to E2-E1 heterodimer. The p62-E1 heterodimer is stable, whereas E2-E1 is unstable and dissociate at low pH. p62 is processed at the last step, presumably to avoid E1 fusion activation before its final export to cell surface. E2 C-terminus contains a transitory transmembrane that would be disrupted by palmitoylation, resulting in reorientation of the C-terminal tail from lumenal to cytoplasmic side. This step is critical since E2 C-terminus is involved in budding by interacting with capsid proteins. This release of E2 C-terminus in cytoplasm occurs lately in protein export, and precludes premature assembly of particles at the endoplasmic reticulum membrane. In terms of biological role, acts as a viroporin that participates in virus glycoprotein processing and transport to the plasma membrane, cell permeabilization and budding of viral particles. Disrupts the calcium homeostasis of the cell, probably at the endoplasmic reticulum level. This leads to cytoplasmic calcium elevation. Because of its lipophilic properties, the 6K protein is postulated to influence the selection of lipids that interact with the transmembrane domains of the glycoproteins, which, in turn, affects the deformability of the bilayer required for the extreme curvature that occurs as budding proceeds. Present in low amount in virions, about 3% compared to viral glycoproteins. Its function is as follows. Class II viral fusion protein. Fusion activity is inactive as long as E1 is bound to E2 in mature virion. After virus attachment to target cell via host MXRA8 and endocytosis, acidification of the endosome induce dissociation of E1/E2 heterodimer and concomitant trimerization of the E1 subunits. This E1 trimer is fusion active, and promotes release of viral nucleocapsid in cytoplasm after endosome and viral membrane fusion. Efficient fusion requires the presence of cholesterol and sphingolipid in the target membrane. This Chikungunya virus (strain Nagpur) (CHIKV) protein is Structural polyprotein.